The chain runs to 95 residues: Aspartyl/glutamyl-tRNA(Asn/Gln) amidotransferase subunit C (95 aa).

It belongs to the GatC family. In terms of assembly, heterotrimer of A, B and C subunits.

The enzyme catalyses L-glutamyl-tRNA(Gln) + L-glutamine + ATP + H2O = L-glutaminyl-tRNA(Gln) + L-glutamate + ADP + phosphate + H(+). It catalyses the reaction L-aspartyl-tRNA(Asn) + L-glutamine + ATP + H2O = L-asparaginyl-tRNA(Asn) + L-glutamate + ADP + phosphate + 2 H(+). Functionally, allows the formation of correctly charged Asn-tRNA(Asn) or Gln-tRNA(Gln) through the transamidation of misacylated Asp-tRNA(Asn) or Glu-tRNA(Gln) in organisms which lack either or both of asparaginyl-tRNA or glutaminyl-tRNA synthetases. The reaction takes place in the presence of glutamine and ATP through an activated phospho-Asp-tRNA(Asn) or phospho-Glu-tRNA(Gln). The chain is Aspartyl/glutamyl-tRNA(Asn/Gln) amidotransferase subunit C from Methylobacterium sp. (strain 4-46).